The chain runs to 27 residues: Larval-specific very high density lipoprotein (27 aa).

In terms of assembly, homodimer. Hemolymph.

It is found in the secreted. The protein localises to the extracellular space. Functionally, unknown (it might play a role in lipid transport and/or storage protein metabolism during metamorphosis). The protein is Larval-specific very high density lipoprotein of Apis mellifera (Honeybee).